A 397-amino-acid polypeptide reads, in one-letter code: Bifunctional enzyme IspD/IspF (397 aa).

A 2-C-methyl-D-erythritol 4-phosphate cytidylyltransferase region spans residues 1-236 (MSIAAIILAA…LKGMQIFPDI (236 aa)). The interval 237–397 (RTGNGYDVHS…TVIYPGEIPK (161 aa)) is 2-C-methyl-D-erythritol 2,4-cyclodiphosphate synthase. A divalent metal cation-binding residues include aspartate 243 and histidine 245. 4-CDP-2-C-methyl-D-erythritol 2-phosphate contacts are provided by residues 243 to 245 (DVH) and 269 to 270 (HS). Histidine 277 serves as a coordination point for a divalent metal cation. Residues 291–293 (DIG), 367–370 (TTNE), phenylalanine 374, and arginine 377 each bind 4-CDP-2-C-methyl-D-erythritol 2-phosphate.

It in the N-terminal section; belongs to the IspD/TarI cytidylyltransferase family. IspD subfamily. The protein in the C-terminal section; belongs to the IspF family. Requires a divalent metal cation as cofactor.

The catalysed reaction is 2-C-methyl-D-erythritol 4-phosphate + CTP + H(+) = 4-CDP-2-C-methyl-D-erythritol + diphosphate. It carries out the reaction 4-CDP-2-C-methyl-D-erythritol 2-phosphate = 2-C-methyl-D-erythritol 2,4-cyclic diphosphate + CMP. It functions in the pathway isoprenoid biosynthesis; isopentenyl diphosphate biosynthesis via DXP pathway; isopentenyl diphosphate from 1-deoxy-D-xylulose 5-phosphate: step 2/6. It participates in isoprenoid biosynthesis; isopentenyl diphosphate biosynthesis via DXP pathway; isopentenyl diphosphate from 1-deoxy-D-xylulose 5-phosphate: step 4/6. In terms of biological role, bifunctional enzyme that catalyzes the formation of 4-diphosphocytidyl-2-C-methyl-D-erythritol from CTP and 2-C-methyl-D-erythritol 4-phosphate (MEP) (IspD), and catalyzes the conversion of 4-diphosphocytidyl-2-C-methyl-D-erythritol 2-phosphate (CDP-ME2P) to 2-C-methyl-D-erythritol 2,4-cyclodiphosphate (ME-CPP) with a corresponding release of cytidine 5-monophosphate (CMP) (IspF). The protein is Bifunctional enzyme IspD/IspF of Bartonella bacilliformis (strain ATCC 35685 / KC583 / Herrer 020/F12,63).